A 98-amino-acid chain; its full sequence is NADH-ubiquinone oxidoreductase chain 4L (98 aa).

Transmembrane regions (helical) follow at residues 1–21 (MSMVYINIFLAFTLSFMGLLI), 30–50 (LLCLEGMMLSLFVMMTITILI), and 61–81 (IILLVFAACEAALGLSLLVMI).

This sequence belongs to the complex I subunit 4L family. Core subunit of respiratory chain NADH dehydrogenase (Complex I) which is composed of 45 different subunits.

It is found in the mitochondrion inner membrane. It carries out the reaction a ubiquinone + NADH + 5 H(+)(in) = a ubiquinol + NAD(+) + 4 H(+)(out). Core subunit of the mitochondrial membrane respiratory chain NADH dehydrogenase (Complex I) which catalyzes electron transfer from NADH through the respiratory chain, using ubiquinone as an electron acceptor. Part of the enzyme membrane arm which is embedded in the lipid bilayer and involved in proton translocation. This chain is NADH-ubiquinone oxidoreductase chain 4L (MT-ND4L), found in Neovison vison (American mink).